Here is a 184-residue protein sequence, read N- to C-terminus: Threonylcarbamoyl-AMP synthase (184 aa).

The YrdC-like domain maps to 1-184 (MNNLENIVEQ…IFTQHIFRQG (184 aa)).

It belongs to the SUA5 family. TsaC subfamily.

It localises to the cytoplasm. It catalyses the reaction L-threonine + hydrogencarbonate + ATP = L-threonylcarbamoyladenylate + diphosphate + H2O. In terms of biological role, required for the formation of a threonylcarbamoyl group on adenosine at position 37 (t(6)A37) in tRNAs that read codons beginning with adenine. Catalyzes the conversion of L-threonine, HCO(3)(-)/CO(2) and ATP to give threonylcarbamoyl-AMP (TC-AMP) as the acyladenylate intermediate, with the release of diphosphate. The sequence is that of Threonylcarbamoyl-AMP synthase from Actinobacillus pleuropneumoniae serotype 5b (strain L20).